A 66-amino-acid polypeptide reads, in one-letter code: Large ribosomal subunit protein bL35 (66 aa).

Positions 1–16 (MPKQKTHRASAKRFKR) are enriched in basic residues. The tract at residues 1–20 (MPKQKTHRASAKRFKRTGSG) is disordered.

It belongs to the bacterial ribosomal protein bL35 family.

This Streptococcus uberis (strain ATCC BAA-854 / 0140J) protein is Large ribosomal subunit protein bL35.